We begin with the raw amino-acid sequence, 56 residues long: uncharacterized protein (56 aa).

A helical membrane pass occupies residues Met-6 to Leu-26.

It localises to the membrane. This is an uncharacterized protein from Dictyostelium discoideum (Social amoeba).